A 105-amino-acid chain; its full sequence is Small ribosomal subunit protein uS10 (105 aa).

It belongs to the universal ribosomal protein uS10 family. In terms of assembly, part of the 30S ribosomal subunit.

Functionally, involved in the binding of tRNA to the ribosomes. This is Small ribosomal subunit protein uS10 from Anaplasma marginale (strain Florida).